The following is a 308-amino-acid chain: UDP-N-acetylenolpyruvoylglucosamine reductase (308 aa).

Residues 32-196 (VGGPAARLYK…ISAKLQLSPG (165 aa)) enclose the FAD-binding PCMH-type domain. Arg176 is an active-site residue. The active-site Proton donor is Ser225. The active site involves Glu296.

This sequence belongs to the MurB family. FAD serves as cofactor.

It localises to the cytoplasm. It carries out the reaction UDP-N-acetyl-alpha-D-muramate + NADP(+) = UDP-N-acetyl-3-O-(1-carboxyvinyl)-alpha-D-glucosamine + NADPH + H(+). The protein operates within cell wall biogenesis; peptidoglycan biosynthesis. Its function is as follows. Cell wall formation. This chain is UDP-N-acetylenolpyruvoylglucosamine reductase, found in Legionella pneumophila (strain Lens).